Consider the following 188-residue polypeptide: HGPRTase-like protein 1 (188 aa).

The protein belongs to the purine/pyrimidine phosphoribosyltransferase family. Archaeal HPRT subfamily.

Its function is as follows. May catalyze a purine salvage reaction, the substrate is unknown. In Haloferax volcanii (strain ATCC 29605 / DSM 3757 / JCM 8879 / NBRC 14742 / NCIMB 2012 / VKM B-1768 / DS2) (Halobacterium volcanii), this protein is HGPRTase-like protein 1.